The chain runs to 206 residues: Guanylate kinase (206 aa).

The region spanning 5 to 183 (FNLLILSGPS…SKEIILSIAK (179 aa)) is the Guanylate kinase-like domain. 12–19 (GPSGAGKS) is an ATP binding site.

This sequence belongs to the guanylate kinase family.

The protein localises to the cytoplasm. The enzyme catalyses GMP + ATP = GDP + ADP. Its function is as follows. Essential for recycling GMP and indirectly, cGMP. This is Guanylate kinase (gmk) from Helicobacter pylori (strain ATCC 700392 / 26695) (Campylobacter pylori).